Here is a 437-residue protein sequence, read N- to C-terminus: Diaminopimelate decarboxylase (437 aa).

Residue Lys-81 is modified to N6-(pyridoxal phosphate)lysine. Residues Gly-256 and 298–301 (EPGR) each bind pyridoxal 5'-phosphate. Positions 301, 337, and 341 each coordinate substrate. The active-site Proton donor is Cys-366. Glu-367 and Tyr-396 together coordinate substrate. Tyr-396 lines the pyridoxal 5'-phosphate pocket.

The protein belongs to the Orn/Lys/Arg decarboxylase class-II family. LysA subfamily. Homodimer. Pyridoxal 5'-phosphate is required as a cofactor.

The catalysed reaction is meso-2,6-diaminopimelate + H(+) = L-lysine + CO2. It functions in the pathway amino-acid biosynthesis; L-lysine biosynthesis via DAP pathway; L-lysine from DL-2,6-diaminopimelate: step 1/1. Functionally, specifically catalyzes the decarboxylation of meso-diaminopimelate (meso-DAP) to L-lysine. In Actinosynnema pretiosum subsp. auranticum, this protein is Diaminopimelate decarboxylase.